The chain runs to 200 residues: Translation machinery-associated protein 22 (200 aa).

The SUI1 domain occupies 106-177 (VQIKRVERNK…DVLEWLVEVH (72 aa)).

This sequence belongs to the DENR family. As to quaternary structure, interacts with the 40S ribosomal subunit.

It is found in the cytoplasm. The sequence is that of Translation machinery-associated protein 22 (TMA22) from Coccidioides immitis (strain RS) (Valley fever fungus).